Consider the following 465-residue polypeptide: UDP-N-acetylmuramoylalanine--D-glutamate ligase (465 aa).

Residue 124 to 130 (GSDGKTT) coordinates ATP.

This sequence belongs to the MurCDEF family.

Its subcellular location is the cytoplasm. It carries out the reaction UDP-N-acetyl-alpha-D-muramoyl-L-alanine + D-glutamate + ATP = UDP-N-acetyl-alpha-D-muramoyl-L-alanyl-D-glutamate + ADP + phosphate + H(+). It functions in the pathway cell wall biogenesis; peptidoglycan biosynthesis. Its function is as follows. Cell wall formation. Catalyzes the addition of glutamate to the nucleotide precursor UDP-N-acetylmuramoyl-L-alanine (UMA). This is UDP-N-acetylmuramoylalanine--D-glutamate ligase from Ruminiclostridium cellulolyticum (strain ATCC 35319 / DSM 5812 / JCM 6584 / H10) (Clostridium cellulolyticum).